The following is a 47-amino-acid chain: Glyceraldehyde-3-phosphate dehydrogenase, cytosolic (47 aa).

The protein belongs to the glyceraldehyde-3-phosphate dehydrogenase family. As to quaternary structure, homotetramer.

The protein localises to the cytoplasm. The enzyme catalyses D-glyceraldehyde 3-phosphate + phosphate + NAD(+) = (2R)-3-phospho-glyceroyl phosphate + NADH + H(+). Its pathway is carbohydrate degradation; glycolysis; pyruvate from D-glyceraldehyde 3-phosphate: step 1/5. This chain is Glyceraldehyde-3-phosphate dehydrogenase, cytosolic, found in Pseudotsuga menziesii (Douglas-fir).